The primary structure comprises 323 residues: tRNA dimethylallyltransferase (323 aa).

21 to 28 is an ATP binding site; that stretch reads GPTACNKS. 23–28 contacts substrate; that stretch reads TACNKS. 3 interaction with substrate tRNA regions span residues 46–49, 171–175, and 252–257; these read DSAL, QRVLR, and RCVGYR.

It belongs to the IPP transferase family. In terms of assembly, monomer. Mg(2+) serves as cofactor.

It carries out the reaction adenosine(37) in tRNA + dimethylallyl diphosphate = N(6)-dimethylallyladenosine(37) in tRNA + diphosphate. In terms of biological role, catalyzes the transfer of a dimethylallyl group onto the adenine at position 37 in tRNAs that read codons beginning with uridine, leading to the formation of N6-(dimethylallyl)adenosine (i(6)A). In Buchnera aphidicola subsp. Baizongia pistaciae (strain Bp), this protein is tRNA dimethylallyltransferase.